A 418-amino-acid chain; its full sequence is D-amino acid dehydrogenase 1 (418 aa).

3–17 (IMVLGGGVIGVTTAY) serves as a coordination point for FAD.

This sequence belongs to the DadA oxidoreductase family. Requires FAD as cofactor.

The catalysed reaction is a D-alpha-amino acid + A + H2O = a 2-oxocarboxylate + AH2 + NH4(+). Its pathway is amino-acid degradation; D-alanine degradation; NH(3) and pyruvate from D-alanine: step 1/1. Oxidative deamination of D-amino acids. The sequence is that of D-amino acid dehydrogenase 1 (dadA1) from Mesorhizobium japonicum (strain LMG 29417 / CECT 9101 / MAFF 303099) (Mesorhizobium loti (strain MAFF 303099)).